The following is a 162-amino-acid chain: Transcriptional regulator MraZ (162 aa).

SpoVT-AbrB domains follow at residues 11-62 (EHPS…GLSV) and 98-141 (AVEC…SRDT).

Belongs to the MraZ family. Forms oligomers.

It is found in the cytoplasm. The protein resides in the nucleoid. This Pelobacter propionicus (strain DSM 2379 / NBRC 103807 / OttBd1) protein is Transcriptional regulator MraZ.